Here is a 245-residue protein sequence, read N- to C-terminus: Thiopurine S-methyltransferase (245 aa).

29–40 (WQEKWVSRRIGF) contacts S-adenosyl-L-methionine. Phe40 provides a ligand contact to substrate. Lys58 carries the post-translational modification N6-acetyllysine. Leu69, Glu90, and Arg152 together coordinate S-adenosyl-L-methionine.

Belongs to the class I-like SAM-binding methyltransferase superfamily. TPMT family. In terms of assembly, monomer.

It localises to the cytoplasm. The catalysed reaction is S-adenosyl-L-methionine + a thiopurine = S-adenosyl-L-homocysteine + a thiopurine S-methylether.. The sequence is that of Thiopurine S-methyltransferase (TPMT) from Canis lupus familiaris (Dog).